The chain runs to 552 residues: MDVEKKLFLKALKEKFEEDPKEKYTKFYIFGGWRQSARKREFVEFAQKLIEKRGGIPFYNPDIGVPLGQRKLMTYKISGTDAFVEGDDLHFCNNAAIQQLVDDIKRTVIVGMDTAHAVLEKRLGVEVTPETINEYMETINHALPGGAVVQEHMVEVHPGLVWDCYAKIFTGNDELADEIDKRFLIDINKEFPEEQAEQIKKYIGNRTYQVSRVPTIVVRCCDGGTVSRWSAMQIGMSFITAYKLCAGEAAIADFSYAAKHADVIQMGMILPARRARGPNEPGGVPFGIFADIIQTSRVSDDPAQVTLEVIGAAATFYDQVWLGSYMSGGVGFTQYASATYTDDILDDFVYYGMDYVEKKYGLCGVKPSMEVVKDIATEVTLYGLEQYDEYPALLEDHFGGSQRAGVTAAAAGCSVAFATGNSNAGINGWYLSQILHKEYHSRLGFYGYDLQDQCGAANSLSIRSDEGLLHECRGPNYPNYAMNVGHQPEYAGIAQAPHAARGDAFCLNPIIKVAFADDNLIFDFKWPRKCIAKGALREFEPAGERDLIIPAA.

Position 150 (Q150) interacts with coenzyme F430. Coenzyme B-binding positions include R228, 259-260 (KH), and R273. Y335 and Y446 together coordinate coenzyme M.

Belongs to the methyl-coenzyme M reductase alpha subunit family. As to quaternary structure, MCR is a hexamer of two alpha, two beta, and two gamma chains, forming a dimer of heterotrimers. Requires coenzyme F430 as cofactor.

The catalysed reaction is coenzyme B + methyl-coenzyme M = methane + coenzyme M-coenzyme B heterodisulfide. Its pathway is one-carbon metabolism; methyl-coenzyme M reduction; methane from methyl-coenzyme M: step 1/1. In terms of biological role, component of the methyl-coenzyme M reductase (MCR) I that catalyzes the reductive cleavage of methyl-coenzyme M (CoM-S-CH3 or 2-(methylthio)ethanesulfonate) using coenzyme B (CoB or 7-mercaptoheptanoylthreonine phosphate) as reductant which results in the production of methane and the mixed heterodisulfide of CoB and CoM (CoM-S-S-CoB). This is the final step in methanogenesis. The protein is Methyl-coenzyme M reductase II subunit alpha (mrtA) of Methanocaldococcus jannaschii (strain ATCC 43067 / DSM 2661 / JAL-1 / JCM 10045 / NBRC 100440) (Methanococcus jannaschii).